Consider the following 133-residue polypeptide: Cell division protein FtsL (133 aa).

Topologically, residues 1-45 are cytoplasmic; it reads MAVEKVYQPYDEQVYNSIPKQQPQTKPEKKTVSRKVVVQLTKFEK. A helical transmembrane segment spans residues 46-65; it reads VLYITLITVIAMLSIYMLSL. The Extracellular portion of the chain corresponds to 66 to 133; sequence KMDAYDTRGK…VVRSNGEAKN (68 aa).

The protein belongs to the FtsL family.

The protein localises to the cell membrane. Its function is as follows. Essential cell division protein. The polypeptide is Cell division protein FtsL (Staphylococcus aureus (strain NCTC 8325 / PS 47)).